The sequence spans 431 residues: Enolase (431 aa).

Glutamine 163 is a (2R)-2-phosphoglycerate binding site. Glutamate 205 acts as the Proton donor in catalysis. Aspartate 242, glutamate 288, and aspartate 315 together coordinate Mg(2+). The (2R)-2-phosphoglycerate site is built by lysine 340, arginine 369, serine 370, and lysine 391. Lysine 340 acts as the Proton acceptor in catalysis.

Belongs to the enolase family. Mg(2+) is required as a cofactor.

It localises to the cytoplasm. It is found in the secreted. The protein resides in the cell surface. The enzyme catalyses (2R)-2-phosphoglycerate = phosphoenolpyruvate + H2O. It functions in the pathway carbohydrate degradation; glycolysis; pyruvate from D-glyceraldehyde 3-phosphate: step 4/5. Its function is as follows. Catalyzes the reversible conversion of 2-phosphoglycerate (2-PG) into phosphoenolpyruvate (PEP). It is essential for the degradation of carbohydrates via glycolysis. This is Enolase from Bacillus cereus (strain ZK / E33L).